The following is a 99-amino-acid chain: Aspartyl/glutamyl-tRNA(Asn/Gln) amidotransferase subunit C (99 aa).

It belongs to the GatC family. As to quaternary structure, heterotrimer of A, B and C subunits.

It catalyses the reaction L-glutamyl-tRNA(Gln) + L-glutamine + ATP + H2O = L-glutaminyl-tRNA(Gln) + L-glutamate + ADP + phosphate + H(+). The enzyme catalyses L-aspartyl-tRNA(Asn) + L-glutamine + ATP + H2O = L-asparaginyl-tRNA(Asn) + L-glutamate + ADP + phosphate + 2 H(+). Functionally, allows the formation of correctly charged Asn-tRNA(Asn) or Gln-tRNA(Gln) through the transamidation of misacylated Asp-tRNA(Asn) or Glu-tRNA(Gln) in organisms which lack either or both of asparaginyl-tRNA or glutaminyl-tRNA synthetases. The reaction takes place in the presence of glutamine and ATP through an activated phospho-Asp-tRNA(Asn) or phospho-Glu-tRNA(Gln). The sequence is that of Aspartyl/glutamyl-tRNA(Asn/Gln) amidotransferase subunit C from Methylibium petroleiphilum (strain ATCC BAA-1232 / LMG 22953 / PM1).